The chain runs to 698 residues: Elongation factor G (698 aa).

In terms of domain architecture, tr-type G spans glutamate 8–valine 290. GTP-binding positions include alanine 17–threonine 24, aspartate 88–histidine 92, and asparagine 142–aspartate 145.

It belongs to the TRAFAC class translation factor GTPase superfamily. Classic translation factor GTPase family. EF-G/EF-2 subfamily.

It is found in the cytoplasm. In terms of biological role, catalyzes the GTP-dependent ribosomal translocation step during translation elongation. During this step, the ribosome changes from the pre-translocational (PRE) to the post-translocational (POST) state as the newly formed A-site-bound peptidyl-tRNA and P-site-bound deacylated tRNA move to the P and E sites, respectively. Catalyzes the coordinated movement of the two tRNA molecules, the mRNA and conformational changes in the ribosome. This chain is Elongation factor G, found in Azoarcus sp. (strain BH72).